A 382-amino-acid chain; its full sequence is Mannitol-1-phosphate 5-dehydrogenase (382 aa).

3–14 (ALHFGAGNIGRG) provides a ligand contact to NAD(+).

Belongs to the mannitol dehydrogenase family.

It catalyses the reaction D-mannitol 1-phosphate + NAD(+) = beta-D-fructose 6-phosphate + NADH + H(+). The protein is Mannitol-1-phosphate 5-dehydrogenase of Salmonella dublin (strain CT_02021853).